The sequence spans 335 residues: MKLAINGFGRIGRNVFKIAFERGIDIVAINDLTDPKTLAHLLKYDSTFGVYNKKVESRDGAIVVDGREIKIIAERDPKNLPWAKLGIDVVIESTGVFSSATSDKGGYLDHVNHAGAKKVILTVPAKDEIKTIVLGVNDHDINSDLKAVSNASCTTNCLAPLAKVLHESFGIEQGLMTTVHAYTNDQRILDLPHSDLRRARAAALSIIPTSTGAAKAVGLVLPELKGKLNGTSMRVPVPTGSIVDLTVQLKKKDVTKEEINSVLRKASETPELKGILGYTEDPIVSSDIKGNSHSSIVDGLETMVLENGFAKILSWYDNEFGYSTRVVDLAQKLVK.

Residues 10 to 11 (RI), Asp-31, Arg-75, and Thr-122 each bind NAD(+). D-glyceraldehyde 3-phosphate is bound by residues 152-154 (SCT) and Thr-183. Cys-153 functions as the Nucleophile in the catalytic mechanism. NAD(+) is bound at residue Asn-184. Residues Arg-198, 211–212 (TG), and Arg-234 contribute to the D-glyceraldehyde 3-phosphate site. Asn-318 is an NAD(+) binding site.

It belongs to the glyceraldehyde-3-phosphate dehydrogenase family. In terms of assembly, homotetramer.

It localises to the cytoplasm. The enzyme catalyses D-glyceraldehyde 3-phosphate + phosphate + NAD(+) = (2R)-3-phospho-glyceroyl phosphate + NADH + H(+). The protein operates within carbohydrate degradation; glycolysis; pyruvate from D-glyceraldehyde 3-phosphate: step 1/5. Functionally, catalyzes the oxidative phosphorylation of glyceraldehyde 3-phosphate (G3P) to 1,3-bisphosphoglycerate (BPG) using the cofactor NAD. The first reaction step involves the formation of a hemiacetal intermediate between G3P and a cysteine residue, and this hemiacetal intermediate is then oxidized to a thioester, with concomitant reduction of NAD to NADH. The reduced NADH is then exchanged with the second NAD, and the thioester is attacked by a nucleophilic inorganic phosphate to produce BPG. The sequence is that of Glyceraldehyde-3-phosphate dehydrogenase (gap) from Borreliella burgdorferi (strain ATCC 35210 / DSM 4680 / CIP 102532 / B31) (Borrelia burgdorferi).